Consider the following 449-residue polypeptide: Sulfite exporter TauE/SafE family protein 5 (449 aa).

12 helical membrane passes run 1–21 (MKTL…NANQ), 57–77 (AIIM…AGGI), 78–98 (GGGG…LKTA), 101–121 (FSAF…LFGG), 127–147 (YDLA…GVIC), 150–170 (VLPE…SSLK), 224–244 (IPWT…VIYL), 259–279 (PCGV…LIFT), 315–335 (AMSF…GMLI), 353–373 (TSFM…LLGM), 378–398 (TAYV…VLVQ), and 409–429 (IIVF…TSFG).

It belongs to the 4-toluene sulfonate uptake permease (TSUP) (TC 2.A.102) family.

It is found in the membrane. The polypeptide is Sulfite exporter TauE/SafE family protein 5 (Arabidopsis thaliana (Mouse-ear cress)).